The following is a 333-amino-acid chain: L-lactate dehydrogenase B chain (333 aa).

NAD(+)-binding positions include 29–57 (GQVGMACAISILGKRLGDELALVDVWEDK) and arginine 99. Arginine 106, asparagine 138, and arginine 169 together coordinate substrate. Asparagine 138 is a binding site for NAD(+). The active-site Proton acceptor is histidine 193. Residue threonine 248 coordinates substrate.

This sequence belongs to the LDH/MDH superfamily. LDH family. Homotetramer.

Its subcellular location is the cytoplasm. The catalysed reaction is (S)-lactate + NAD(+) = pyruvate + NADH + H(+). Its pathway is fermentation; pyruvate fermentation to lactate; (S)-lactate from pyruvate: step 1/1. Its function is as follows. Interconverts simultaneously and stereospecifically pyruvate and lactate with concomitant interconversion of NADH and NAD(+). The sequence is that of L-lactate dehydrogenase B chain (LDHB) from Alligator mississippiensis (American alligator).